The sequence spans 251 residues: tRNA-uridine aminocarboxypropyltransferase 2 (251 aa).

4 residues coordinate Zn(2+): Cys23, Cys26, Cys33, and Cys35. The short motif at 131 to 134 is the DXTW element; sequence DGTW.

The protein belongs to the TDD superfamily. DTWD2 family.

The catalysed reaction is a uridine in tRNA + S-adenosyl-L-methionine = a 3-[(3S)-3-amino-3-carboxypropyl]uridine in tRNA + S-methyl-5'-thioadenosine + H(+). Its function is as follows. Catalyzes the formation of 3-(3-amino-3-carboxypropyl)uridine (acp3U) at position 20a in the D-loop of several cytoplasmic tRNAs (acp3U(20a)). The protein is tRNA-uridine aminocarboxypropyltransferase 2 of Drosophila melanogaster (Fruit fly).